Here is a 228-residue protein sequence, read N- to C-terminus: Histone H1-III (228 aa).

Low complexity predominate over residues 1-18 (MSDPAPEVASAVPVASPA). 2 disordered regions span residues 1 to 44 (MSDP…PPVS) and 98 to 228 (LQTK…AKKA). An H15 domain is found at 39-113 (THPPVSEMVV…GASGSFKLPA (75 aa)). Residues 115-133 (AKKEKVAKTPKKAAGEKKP) are compositionally biased toward basic and acidic residues. Basic residues-rich tracts occupy residues 148-170 (SIAK…KSTK) and 178-209 (AAKK…KVAA). Basic and acidic residues predominate over residues 211–221 (KPAEKKPEAAK).

This sequence belongs to the histone H1/H5 family.

The protein resides in the nucleus. It localises to the chromosome. In terms of biological role, histones H1 are necessary for the condensation of nucleosome chains into higher-order structures. The sequence is that of Histone H1-III from Glyptotendipes barbipes (Midge).